The following is a 505-amino-acid chain: Alkylglycerol monooxygenase (505 aa).

A run of 2 helical transmembrane segments spans residues 56–76 (VSAWWLVFLTAEFFILFISGH) and 104–124 (AVAIFLYVIVWDNWRILELPW). A Fatty acid hydroxylase domain is found at 130–262 (WIFCLFFQDF…FIIWDKMFNT (133 aa)). The short motif at 145 to 149 (HRAVH) is the Histidine box-1 element. A Histidine box-2 motif is present at residues 158–162 (HTIHH). A Histidine box-3 motif is present at residues 234–238 (HRVHH). 4 helical membrane-spanning segments follow: residues 366 to 386 (ILVKVYVASSFLLLLAIFFHF), 396 to 416 (LDCTVKIAYFVVTMQCFGAFF), 430 to 450 (CCGVLIYYGVLMFDHIGAGTH), and 452 to 472 (LFVISLHIMAIALWTTDVLVE).

Belongs to the sterol desaturase family. TMEM195 subfamily. Fe cation is required as a cofactor.

Its subcellular location is the endoplasmic reticulum membrane. It catalyses the reaction 1-O-(1,2-saturated-alkyl)-sn-glycerol + (6R)-L-erythro-5,6,7,8-tetrahydrobiopterin + O2 = a 1-(1-hydroxyalkyl)-sn-glycerol + (6R)-L-erythro-6,7-dihydrobiopterin + H2O. Its function is as follows. Glyceryl-ether monooxygenase that cleaves the O-alkyl bond of ether lipids. The polypeptide is Alkylglycerol monooxygenase (Caenorhabditis elegans).